The chain runs to 180 residues: ATP-dependent protease subunit HslV (180 aa).

The active site involves Thr6. Na(+)-binding residues include Ala164, Cys167, and Thr170.

This sequence belongs to the peptidase T1B family. HslV subfamily. In terms of assembly, a double ring-shaped homohexamer of HslV is capped on each side by a ring-shaped HslU homohexamer. The assembly of the HslU/HslV complex is dependent on binding of ATP.

It localises to the cytoplasm. It carries out the reaction ATP-dependent cleavage of peptide bonds with broad specificity.. With respect to regulation, allosterically activated by HslU binding. Functionally, protease subunit of a proteasome-like degradation complex believed to be a general protein degrading machinery. This Borrelia turicatae (strain 91E135) protein is ATP-dependent protease subunit HslV.